An 813-amino-acid polypeptide reads, in one-letter code: Tax1-binding protein 1 homolog (813 aa).

Phosphoserine occurs at positions 124, 138, and 225. Residues Thr144 to Asp596 are a coiled coil. Residues Glu320–Asp420 are oligomerization. Ser618 is modified (phosphoserine; by IKKA). Position 631 is a phosphoserine (Ser631). The interval Ala667–Asn732 is disordered. Phosphoserine; by IKKA is present on Ser692. 2 consecutive UBZ1-type zinc fingers follow at residues His751–His777 and Trp778–His804. Residues Cys754, Cys757, His773, His777, Cys781, Cys784, His800, and His804 each contribute to the Zn(2+) site.

In terms of assembly, homooligomer. Interacts with TNFAIP3. Interacts with STARD13. Interacts with MYO6. Interacts with TOM1; the interaction is indirect and is mediated by MYO6, which acts as a bridge between TOM1 and TAX1BP1. Interacts with MAVS; this interaction induces MAVS polyubiquitination. Interacts with TNIP1. Interacts with TRAF6; this interaction mediates deubiquitination of TRAF6 and inhibition of NF-kappa-B activation. Interacts with RIPK1; this interaction negatively regulates RIPK1 ubiquitination. Interacts with NBR1. Interacts with TBK1. Interacts with RB1CC1. Interacts with SQSTM1. Interacts with AZI2. Interacts with TICAM1 and TRIM32; these interactions target TICAM1 to TAX1BP1-mediated selective autophagic degradation. Post-translationally, phosphorylated in the C-terminal region by CHUK/IKKA leading to NF-kappa-B signaling down-regulation.

It localises to the cytoplasm. It is found in the mitochondrion. The protein resides in the preautophagosomal structure. The protein localises to the cytoplasmic vesicle. Its subcellular location is the autophagosome. In terms of biological role, ubiquitin-binding adapter that participates in inflammatory, antiviral and innate immune processes as well as selective autophagy regulation. Plays a key role in the negative regulation of NF-kappa-B and IRF3 signalings by acting as an adapter for the ubiquitin-editing enzyme A20/TNFAIP3 to bind and inactivate its substrates. Disrupts the interactions between the E3 ubiquitin ligase TRAF3 and TBK1/IKBKE to attenuate 'Lys63'-linked polyubiquitination of TBK1 and thereby IFN-beta production. Also recruits A20/TNFAIP3 to ubiquitinated signaling proteins TRAF6 and RIPK1, leading to their deubiquitination and disruption of IL-1 and TNF-induced NF-kappa-B signaling pathways. Inhibits virus-induced apoptosis by inducing the 'Lys-48'-linked polyubiquitination and degradation of MAVS via recruitment of the E3 ligase ITCH, thereby attenuating MAVS-mediated apoptosis signaling. As a macroautophagy/autophagy receptor, facilitates the xenophagic clearance of pathogenic bacteria such as Salmonella typhimurium and Mycobacterium tuberculosis. Upon NBR1 recruitment to the SQSTM1-ubiquitin condensates, acts as the major recruiter of RB1CC1 to these ubiquitin condensates to promote their autophagic degradation. Mediates the autophagic degradation of other substrates including TICAM1. In Rattus norvegicus (Rat), this protein is Tax1-binding protein 1 homolog (Tax1bp1).